We begin with the raw amino-acid sequence, 94 residues long: FXYD domain-containing ion transport regulator 6 (94 aa).

Residues 1–17 (METVLILCSLLAPVVLA) form the signal peptide. At 18–34 (SAAEKEKEKDPFYYDYQ) the chain is on the extracellular side. The chain crosses the membrane as a helical span at residues 35–57 (TLRIGGLVFAVVLFSVGILLILS). Topologically, residues 58–94 (RRCKCSFNQKPRAPGDEEAQVENLITTNAAEPQKAEN) are cytoplasmic.

It belongs to the FXYD family. In terms of assembly, regulatory subunit of the sodium/potassium-transporting ATPase which is composed of a catalytic alpha subunit, a non-catalytic beta subunit and an additional regulatory subunit. The regulatory subunit, a member of the FXYD protein family, modulates the enzymatic activity in a tissue- and isoform-specific way by changing affinities of the Na+/K+-ATPase toward Na(+), K(+) or ATP. As to expression, expressed in the neuronal fibers of the medial part of lateral habenula nucleus, thalamus, hypothalamus, stria terminalis, zona incerta, amygdaloid body and cingulum, olfactory bulb, hippocampus, cerebral cortex and cerebellum. In the cerebellum there is a predominant expression pattern in the granule layer of lobules VI-IX of the posterior lobe. Detected in inner ear.

The protein resides in the cell membrane. Associates with and regulates the activity of the sodium/potassium-transporting ATPase (NKA) which catalyzes the hydrolysis of ATP coupled with the exchange of Na(+) and K(+) ions across the plasma membrane. Decreases the apparent affinity of the transporter for Na(+). In addition to modulating NKA kinetics, may also function as a regulator of NKA localization to the plasma membrane. This Rattus norvegicus (Rat) protein is FXYD domain-containing ion transport regulator 6 (Fxyd6).